The primary structure comprises 240 residues: Biosynthetic peptidoglycan transglycosylase (240 aa).

A helical transmembrane segment spans residues 16–36; the sequence is VLMALLCLFLIYELAMFSMVV.

The protein belongs to the glycosyltransferase 51 family.

The protein resides in the cell inner membrane. It catalyses the reaction [GlcNAc-(1-&gt;4)-Mur2Ac(oyl-L-Ala-gamma-D-Glu-L-Lys-D-Ala-D-Ala)](n)-di-trans,octa-cis-undecaprenyl diphosphate + beta-D-GlcNAc-(1-&gt;4)-Mur2Ac(oyl-L-Ala-gamma-D-Glu-L-Lys-D-Ala-D-Ala)-di-trans,octa-cis-undecaprenyl diphosphate = [GlcNAc-(1-&gt;4)-Mur2Ac(oyl-L-Ala-gamma-D-Glu-L-Lys-D-Ala-D-Ala)](n+1)-di-trans,octa-cis-undecaprenyl diphosphate + di-trans,octa-cis-undecaprenyl diphosphate + H(+). Its pathway is cell wall biogenesis; peptidoglycan biosynthesis. Functionally, peptidoglycan polymerase that catalyzes glycan chain elongation from lipid-linked precursors. This chain is Biosynthetic peptidoglycan transglycosylase, found in Bordetella avium (strain 197N).